Reading from the N-terminus, the 665-residue chain is Methionine--tRNA ligase (665 aa).

A 'HIGH' region motif is present at residues 12–22 (YYPSGKLHIGS). Positions 308 to 312 (KMSKS) match the 'KMSKS' region motif. Residue Lys-311 coordinates ATP. The tRNA-binding domain maps to 562-665 (TFDAVEIRVA…SSVPNGSIIG (104 aa)).

Belongs to the class-I aminoacyl-tRNA synthetase family. MetG type 2B subfamily. Homodimer.

It is found in the cytoplasm. The catalysed reaction is tRNA(Met) + L-methionine + ATP = L-methionyl-tRNA(Met) + AMP + diphosphate. In terms of biological role, is required not only for elongation of protein synthesis but also for the initiation of all mRNA translation through initiator tRNA(fMet) aminoacylation. In Streptococcus pyogenes serotype M1, this protein is Methionine--tRNA ligase (metG).